The following is a 316-amino-acid chain: Neutrophil-stimulating factor 1 (316 aa).

A signal peptide spans 1–21; sequence METSLPITVVFLIVLITGAQT. Positions 126–316 are involved in interaction with human CD47; that stretch reads HGEMLERMTA…WFAVSWNDRG (191 aa). Asn-169 carries N-linked (GlcNAc...) asparagine glycosylation.

As to quaternary structure, interacts with human CD4. Interacts with human CD47; the interaction results in inhibition of phagocytosis activity of host macrophages. As to expression, female salivary gland (at protein level). Saliva (at protein level). Some expression in ovary and midgut (at protein level).

It localises to the secreted. Its function is as follows. Activates host neutrophils; induces expression of IL1B and CXCL2 at the bite site. Promotes activation of human CD4(+) T-cells. Inhibits phagocytosis activity of host macrophages via the interaction with CD47 receptor on their surface. Suppresses expression of pro-inflammatory cytokines, such as IFN-gamma/IFNG, IL2, TNF-alpha/TNF, IL12B, IL8/CXCL8, IL6, in host white blood cells. Reduces host polymorphonuclear neutrophil chemotaxis induced by N-formylmethionine-leucylphenylalanine (fMLF). Reduces CD11b/ITGAM expression in fMLF-induced host polymorphonuclear neutrophils. (Microbial infection) Enhances early replication of Zika virus in the host. The chain is Neutrophil-stimulating factor 1 from Aedes aegypti (Yellowfever mosquito).